The primary structure comprises 545 residues: CTP synthase (545 aa).

The segment at 1 to 266 (MTTNYIFVTG…DDYICKRFSL (266 aa)) is amidoligase domain. S14 serves as a coordination point for CTP. UTP is bound at residue S14. Residues 15–20 (SLGKGI) and D72 each bind ATP. Mg(2+) is bound by residues D72 and E140. CTP is bound by residues 147–149 (DIE), 187–192 (KTKPTQ), and K223. UTP contacts are provided by residues 187–192 (KTKPTQ) and K223. 239–241 (KDV) contacts ATP. Residues 291–542 (TIGMVGKYIE…VKAASEYQKR (252 aa)) enclose the Glutamine amidotransferase type-1 domain. G352 contributes to the L-glutamine binding site. Catalysis depends on C379, which acts as the Nucleophile; for glutamine hydrolysis. L-glutamine is bound by residues 380–383 (LGMQ), E403, and R470. Active-site residues include H515 and E517.

Belongs to the CTP synthase family. In terms of assembly, homotetramer.

It carries out the reaction UTP + L-glutamine + ATP + H2O = CTP + L-glutamate + ADP + phosphate + 2 H(+). The enzyme catalyses L-glutamine + H2O = L-glutamate + NH4(+). The catalysed reaction is UTP + NH4(+) + ATP = CTP + ADP + phosphate + 2 H(+). It participates in pyrimidine metabolism; CTP biosynthesis via de novo pathway; CTP from UDP: step 2/2. Allosterically activated by GTP, when glutamine is the substrate; GTP has no effect on the reaction when ammonia is the substrate. The allosteric effector GTP functions by stabilizing the protein conformation that binds the tetrahedral intermediate(s) formed during glutamine hydrolysis. Inhibited by the product CTP, via allosteric rather than competitive inhibition. In terms of biological role, catalyzes the ATP-dependent amination of UTP to CTP with either L-glutamine or ammonia as the source of nitrogen. Regulates intracellular CTP levels through interactions with the four ribonucleotide triphosphates. In Enterobacter sp. (strain 638), this protein is CTP synthase.